The following is a 104-amino-acid chain: Large ribosomal subunit protein bL21 (104 aa).

Belongs to the bacterial ribosomal protein bL21 family. Part of the 50S ribosomal subunit. Contacts protein L20.

Functionally, this protein binds to 23S rRNA in the presence of protein L20. This is Large ribosomal subunit protein bL21 from Francisella tularensis subsp. holarctica (strain FTNF002-00 / FTA).